We begin with the raw amino-acid sequence, 144 residues long: Large ribosomal subunit protein uL13 (144 aa).

This sequence belongs to the universal ribosomal protein uL13 family. As to quaternary structure, part of the 50S ribosomal subunit.

Its function is as follows. This protein is one of the early assembly proteins of the 50S ribosomal subunit, although it is not seen to bind rRNA by itself. It is important during the early stages of 50S assembly. The chain is Large ribosomal subunit protein uL13 from Mycoplasmopsis synoviae (strain 53) (Mycoplasma synoviae).